The following is a 285-amino-acid chain: Protease HtpX homolog (285 aa).

2 helical membrane passes run 7-27 and 30-50; these read TAML…MIGG and GMTI…WFSD. Histidine 131 serves as a coordination point for Zn(2+). The active site involves glutamate 132. Histidine 135 contributes to the Zn(2+) binding site. 2 consecutive transmembrane segments (helical) span residues 146–166 and 177–197; these read ITAT…FFGG and IAGI…QMAI. Glutamate 202 provides a ligand contact to Zn(2+).

This sequence belongs to the peptidase M48B family. It depends on Zn(2+) as a cofactor.

It is found in the cell inner membrane. The protein is Protease HtpX homolog of Burkholderia lata (strain ATCC 17760 / DSM 23089 / LMG 22485 / NCIMB 9086 / R18194 / 383).